A 432-amino-acid polypeptide reads, in one-letter code: MGKNVVVLGTQWGDEGKGKVVDLLTERAKYVVRYQGGHNAGHTLVINGEKTVLHLIPSGILRENVVSIIANGVVLAPDALLREMTELEARGVPVRERLLLSEACPLILPYHVALDNAREKARGAKAIGTTGRGIGPAYEDKVARRGLRVGDLFDKASFAVKLKEIMEYHNFQLVNYYHVDAVDYQSVLDEVMAVADLLTSMVVDVADLLNKAYRNGEYVMFEGAQGTLLDIDHGTYPYVTSSNTTAGGVATGSGIGPRCVDYVLGIVKAYSTRVGAGPFPTELFDSVGEFLCEKGNEFGATTGRRRRTGWLDAVAVRRAVELNSLSGFCLTKLDVLDGLDEVKICVGYRLPDGREVDVTPLAAEGWEGIEPIYEVLPGWKESTFGVKLRDGLPQAALNYIKRIEEVTGVPVDIISTGPDREETIVLRHPFDA.

GTP contacts are provided by residues 13 to 19 and 41 to 43; these read GDEGKGK and GHT. Asp-14 functions as the Proton acceptor in the catalytic mechanism. Mg(2+)-binding residues include Asp-14 and Gly-41. Residues 14-17, 39-42, Thr-130, Arg-144, Gln-225, Thr-240, and Arg-304 each bind IMP; these read DEGK and NAGH. His-42 acts as the Proton donor in catalysis. 300-306 provides a ligand contact to substrate; sequence ATTGRRR. Residues Arg-306, 332 to 334, and 415 to 417 each bind GTP; these read KLD and STG.

It belongs to the adenylosuccinate synthetase family. As to quaternary structure, homodimer. Mg(2+) serves as cofactor.

The protein localises to the cytoplasm. It catalyses the reaction IMP + L-aspartate + GTP = N(6)-(1,2-dicarboxyethyl)-AMP + GDP + phosphate + 2 H(+). It participates in purine metabolism; AMP biosynthesis via de novo pathway; AMP from IMP: step 1/2. Functionally, plays an important role in the de novo pathway of purine nucleotide biosynthesis. Catalyzes the first committed step in the biosynthesis of AMP from IMP. This is Adenylosuccinate synthetase from Edwardsiella ictaluri (strain 93-146).